The chain runs to 129 residues: uncharacterized protein (129 aa).

To M.pneumoniae MPN_376 N-terminal region.

This is an uncharacterized protein from Mycoplasma pneumoniae (strain ATCC 29342 / M129 / Subtype 1) (Mycoplasmoides pneumoniae).